The chain runs to 958 residues: Atromentin synthetase greA (958 aa).

The segment at 60 to 465 (SIQTKTFSAF…SGRIKDTVIV (406 aa)) is adenylation (A) domain. The Carrier domain occupies 597-675 (APSTETEKAL…SLANYVNALL (79 aa)). The tract at residues 602 to 672 (TEKALAKIYA…VVSSLANYVN (71 aa)) is thiolation and peptide carrier (T) domain. Position 634 is an O-(pantetheine 4'-phosphoryl)serine (Ser-634). Positions 698–946 (PIFFVHPGVG…MDFDHVPQFQ (249 aa)) are thioesterase (TE) domain.

The protein belongs to the ATP-dependent AMP-binding enzyme family.

The protein operates within secondary metabolite biosynthesis. An L-tyrosine:2-oxoglutarate aminotransferase and atromentin synthetase greA catalyze consecutive steps to turn over L-tyrosine into atromentin, which represents the generic precursor molecule for the entire terphenylquinone and pulvinic acid family of pigments, which are widely distributed secondary metabolites in homobasidiomycetes. The first step catalyzed by the aminotransferase converts L-tyrosine in to 4-hydroxyphenylpyruvate (4-HPP). Adenylation of two 4-HPP monomers by the greA adenylation (A) domain, covalent tethering of the monomers as a thioester and oxoester onto the greA thiolation (T) and thioesterase (TE) domains, respectively, and symmetric C-C-bond formation between two monomers catalyzed by the greA TE domain leads to atromentin. The sequence is that of Atromentin synthetase greA (greA) from Suillus grevillei (Larch bolete).